We begin with the raw amino-acid sequence, 122 residues long: Small ribosomal subunit protein uS13 (122 aa).

The disordered stretch occupies residues 97-122 (PVRGQRTKTNARTRKGPARTVAGKKK).

This sequence belongs to the universal ribosomal protein uS13 family. In terms of assembly, part of the 30S ribosomal subunit. Forms a loose heterodimer with protein S19. Forms two bridges to the 50S subunit in the 70S ribosome.

Its function is as follows. Located at the top of the head of the 30S subunit, it contacts several helices of the 16S rRNA. In the 70S ribosome it contacts the 23S rRNA (bridge B1a) and protein L5 of the 50S subunit (bridge B1b), connecting the 2 subunits; these bridges are implicated in subunit movement. Contacts the tRNAs in the A and P-sites. The sequence is that of Small ribosomal subunit protein uS13 from Pelobacter propionicus (strain DSM 2379 / NBRC 103807 / OttBd1).